We begin with the raw amino-acid sequence, 305 residues long: Ribonuclease BN (305 aa).

Zn(2+) contacts are provided by H64, H66, D68, H69, H141, D212, and H270. The Proton acceptor role is filled by D68.

It belongs to the RNase Z family. RNase BN subfamily. In terms of assembly, homodimer. Zn(2+) serves as cofactor.

Its function is as follows. Zinc phosphodiesterase, which has both exoribonuclease and endoribonuclease activities. This is Ribonuclease BN from Salmonella paratyphi C (strain RKS4594).